A 55-amino-acid polypeptide reads, in one-letter code: Large ribosomal subunit protein bL33B (55 aa).

It belongs to the bacterial ribosomal protein bL33 family.

This is Large ribosomal subunit protein bL33B from Mycolicibacterium paratuberculosis (strain ATCC BAA-968 / K-10) (Mycobacterium paratuberculosis).